We begin with the raw amino-acid sequence, 158 residues long: Arginine repressor (158 aa).

It belongs to the ArgR family.

It localises to the cytoplasm. The protein operates within amino-acid biosynthesis; L-arginine biosynthesis [regulation]. Its function is as follows. Regulates arginine biosynthesis genes. In Phocaeicola vulgatus (strain ATCC 8482 / DSM 1447 / JCM 5826 / CCUG 4940 / NBRC 14291 / NCTC 11154) (Bacteroides vulgatus), this protein is Arginine repressor.